The chain runs to 110 residues: UPF0367 protein sync_2587 (110 aa).

It belongs to the UPF0367 family.

The chain is UPF0367 protein sync_2587 from Synechococcus sp. (strain CC9311).